The chain runs to 281 residues: MKHPFSRLFSFGEKEQEEAGGKQEREEVRNIPVASIIPNRFQPRTVFDEEKIAELALTIRTHGIIQPIVVRECDNGQFEIIAGERRWRAVQKLGWTEIPAIIKNLNDKETASVALIENLQREELTPIEEAMAYARLIELHDLTQEALAQRLGKGQSTIANKLRLLKLPQEVQEALLQRAITERHARALIALKDKEKQLKLLQEIIDKQLNVKQTEDRVLKMLEAGERKPKPKRKAFSRDMRIAVNTIRQSLSMVENSGVSVHSEEEEFDDYYQITIRIAKK.

A disordered region spans residues 1–26 (MKHPFSRLFSFGEKEQEEAGGKQERE). Over residues 12 to 26 (GEKEQEEAGGKQERE) the composition is skewed to basic and acidic residues. Positions 145–164 (EALAQRLGKGQSTIANKLRL) form a DNA-binding region, H-T-H motif.

The protein belongs to the ParB family.

Its subcellular location is the cytoplasm. It localises to the nucleoid. Functionally, effects nucleoid occlusion by binding relatively nonspecifically to DNA and preventing the assembly of the division machinery in the vicinity of the nucleoid, especially under conditions that disturb the cell cycle. It helps to coordinate cell division and chromosome segregation by preventing the formation of the Z ring through the nucleoid, which would cause chromosome breakage. The protein is Nucleoid occlusion protein of Geobacillus thermodenitrificans (strain NG80-2).